The primary structure comprises 559 residues: Potassium-transporting ATPase potassium-binding subunit (559 aa).

13 helical membrane passes run 5-25, 27-47, 63-83, 132-152, 170-190, 253-273, 283-303, 327-347, 356-376, 379-399, 416-436, 484-504, and 524-544; these read GFLL…PLGS, LARL…RILW, LLAL…LLFW, GLTV…FALI, LVRI…LFFI, LAQM…FGEA, LLWA…WAEV, FGVL…CGAV, ALGG…FGGV, GLYG…LMIG, MTAL…ALAM, LLAF…MAIA, and GALF…LTFI.

It belongs to the KdpA family. The system is composed of three essential subunits: KdpA, KdpB and KdpC.

The protein localises to the cell inner membrane. In terms of biological role, part of the high-affinity ATP-driven potassium transport (or Kdp) system, which catalyzes the hydrolysis of ATP coupled with the electrogenic transport of potassium into the cytoplasm. This subunit binds the periplasmic potassium ions and delivers the ions to the membrane domain of KdpB through an intramembrane tunnel. This chain is Potassium-transporting ATPase potassium-binding subunit, found in Salmonella enteritidis PT4 (strain P125109).